Reading from the N-terminus, the 353-residue chain is Phospho-N-acetylmuramoyl-pentapeptide-transferase (353 aa).

10 helical membrane passes run 24 to 44, 66 to 86, 88 to 108, 129 to 149, 160 to 180, 192 to 212, 229 to 249, 256 to 276, 281 to 301, and 330 to 350; these read LGFF…ILWA, TPTM…VLCA, LSNL…FVGF, FGML…KGLD, PLFE…FLST, GLAS…VYVA, VGEL…FLWY, VFMG…NAIV, ILLV…ILQV, and KVIV…LLSL.

This sequence belongs to the glycosyltransferase 4 family. MraY subfamily. It depends on Mg(2+) as a cofactor.

It is found in the cell inner membrane. The enzyme catalyses UDP-N-acetyl-alpha-D-muramoyl-L-alanyl-gamma-D-glutamyl-meso-2,6-diaminopimeloyl-D-alanyl-D-alanine + di-trans,octa-cis-undecaprenyl phosphate = di-trans,octa-cis-undecaprenyl diphospho-N-acetyl-alpha-D-muramoyl-L-alanyl-D-glutamyl-meso-2,6-diaminopimeloyl-D-alanyl-D-alanine + UMP. It functions in the pathway cell wall biogenesis; peptidoglycan biosynthesis. Functionally, catalyzes the initial step of the lipid cycle reactions in the biosynthesis of the cell wall peptidoglycan: transfers peptidoglycan precursor phospho-MurNAc-pentapeptide from UDP-MurNAc-pentapeptide onto the lipid carrier undecaprenyl phosphate, yielding undecaprenyl-pyrophosphoryl-MurNAc-pentapeptide, known as lipid I. The polypeptide is Phospho-N-acetylmuramoyl-pentapeptide-transferase (Helicobacter pylori (strain J99 / ATCC 700824) (Campylobacter pylori J99)).